The following is a 207-amino-acid chain: Ras-related protein Rab-7a (207 aa).

Threonine 2 bears the N-acetylthreonine mark. GTP is bound by residues serine 17, glycine 18, valine 19, glycine 20, lysine 21, threonine 22, serine 23, serine 34, asparagine 35, tyrosine 37, and threonine 40. Position 22 (threonine 22) interacts with Mg(2+). Residues 28-41 (YVNKKFSNQYKATI) carry the Switch 1 motif. The Mg(2+) site is built by threonine 40 and aspartate 63. Glycine 66 is a binding site for GTP. Residues 67–82 (QERFQSLGVAFYRGAD) carry the Switch 2 motif. The residue at position 72 (serine 72) is a Phosphoserine. Residues asparagine 125, lysine 126, aspartate 128, alanine 156, and lysine 157 each coordinate GTP. Residues lysine 191 and lysine 194 each participate in a glycyl lysine isopeptide (Lys-Gly) (interchain with G-Cter in ubiquitin) cross-link. 2 S-geranylgeranyl cysteine lipidation sites follow: cysteine 205 and cysteine 207. Residue cysteine 207 is modified to Cysteine methyl ester.

It belongs to the small GTPase superfamily. Rab family. As to quaternary structure, interacts with NTRK1/TRKA, RILP, PSMA7, RNF115 and FYCO1. Interacts with the PIK3C3/VPS34-PIK3R4 complex. The GTP-bound form interacts with OSBPL1A and RAC1. Interacts with CLN3. Interacts with CHM, the substrate-binding subunit of the Rab geranylgeranyltransferase complex. Interacts with C9orf72. Does not interact with HPS4 and the BLOC-3 complex (heterodimer of HPS1 and HPS4). Interacts with CLN5. Interacts with PLEKHM1 (via N- and C-terminus). Interacts with PRPH; the interaction is direct. Interacts with VPS13A. The GDP-bound form interacts with RIMOC1. Interacts with the MON1A-CCZ1B complex and this interaction is enhanced in the presence of RIMOC1. Interacts with VPS39 and VPS41. Forms a ternary complex with LAMP2 and RUFY4; the interaction with LAMP2 is mediated by RUFY4 (via RUN and coiled coil domains). It depends on Mg(2+) as a cofactor. Post-translationally, deubiquitination at Lys-191 and Lys-194 by USP32. In terms of processing, phosphorylated at Ser-72 by LRRK1; phosphorylation is dependent on protein kinase C (PKC) activation of LRRK1. Prenylated. Prenylation is required for association with cellular membranes. As to expression, widely expressed. High expression in liver, heart and kidney. Found in sensory and motor neurons.

It is found in the cytoplasmic vesicle. Its subcellular location is the phagosome membrane. It localises to the late endosome membrane. The protein localises to the lysosome membrane. The protein resides in the melanosome membrane. It is found in the autophagosome membrane. Its subcellular location is the lipid droplet. It localises to the endosome membrane. The protein localises to the mitochondrion membrane. The enzyme catalyses GTP + H2O = GDP + phosphate + H(+). Its activity is regulated as follows. Regulated by guanine nucleotide exchange factors (GEFs) which promote the exchange of bound GDP for free GTP. Regulated by GTPase activating proteins (GAPs) which increase the GTP hydrolysis activity. Inhibited by GDP dissociation inhibitors (GDIs). Its function is as follows. The small GTPases Rab are key regulators of intracellular membrane trafficking, from the formation of transport vesicles to their fusion with membranes. Rabs cycle between an inactive GDP-bound form and an active GTP-bound form that is able to recruit to membranes different sets of downstream effectors directly responsible for vesicle formation, movement, tethering and fusion. In its active state, RAB7A binds to a variety of effector proteins playing a key role in the regulation of endo-lysosomal trafficking. Governs early-to-late endosomal maturation, microtubule minus-end as well as plus-end directed endosomal migration and positioning, and endosome-lysosome transport through different protein-protein interaction cascades. Also plays a central role in growth-factor-mediated cell signaling, nutrient-transporter-mediated nutrient uptake, neurotrophin transport in the axons of neurons and lipid metabolism. Also involved in regulation of some specialized endosomal membrane trafficking, such as maturation of melanosomes, pathogen-induced phagosomes (or vacuoles) and autophagosomes. Plays a role in the maturation and acidification of phagosomes that engulf pathogens, such as S.aureus and Mycobacteria. Plays a role in the fusion of phagosomes with lysosomes. In concert with RAC1, plays a role in regulating the formation of RBs (ruffled borders) in osteoclasts. Controls the endosomal trafficking and neurite outgrowth signaling of NTRK1/TRKA. Regulates the endocytic trafficking of the EGF-EGFR complex by regulating its lysosomal degradation. Involved in the ADRB2-stimulated lipolysis through lipophagy, a cytosolic lipase-independent autophagic pathway. Required for the exosomal release of SDCBP, CD63 and syndecan. Required for vesicular trafficking and cell surface expression of ACE2. May play a role in PRPH neuronal intermediate filament assembly. The polypeptide is Ras-related protein Rab-7a (Mus musculus (Mouse)).